A 341-amino-acid chain; its full sequence is Vacuolar morphogenesis protein 7 homolog (341 aa).

Positions 1-115 (MALKIKIPET…KFLNIKDESE (115 aa)) constitute a PX domain. Low complexity predominate over residues 214-233 (NSPVAPPSASSQLNSSNPSS). Residues 214–265 (NSPVAPPSASSQLNSSNPSSPFRPLSASTDKQSNTSLNRVLGKNRMPETQTT) are disordered. Polar residues predominate over residues 239-251 (SASTDKQSNTSLN). The t-SNARE coiled-coil homology domain occupies 278 to 340 (NQTMEDQDMQ…HRTRAGLRKL (63 aa)).

Possibly multimeric.

The protein resides in the vacuole. Essential for proper morphogenesis of the vacuole. May exist as structural reinforcement on the surface of the vacuolar membrane and be required for maintenance against rupture by osmotic pressure. The sequence is that of Vacuolar morphogenesis protein 7 homolog from Schizosaccharomyces pombe (strain 972 / ATCC 24843) (Fission yeast).